The chain runs to 1150 residues: Cell division cycle and apoptosis regulator protein 1 (1150 aa).

An interaction with AR region spans residues 1–249; sequence MAQFGGQKNP…TQPQPQSLLQ (249 aa). Disordered regions lie at residues 124-146 and 285-354; these read PTAQ…QPQK and IVSQ…SPRR. Positions 134–146 are enriched in low complexity; the sequence is TPRSSQQQTQPQK. An interaction with GATA2 region spans residues 203-660; that stretch reads QRIQTLPNQN…RALSSKGLKS (458 aa). Basic and acidic residues-rich tracts occupy residues 293-334 and 341-352; these read RRLD…ERSP and ERSPRRERERSP. Ser-456 is subject to Phosphoserine. The stretch at 594–618 forms a coiled coil; the sequence is KQQLVEKLQGERKEADGEQDEEEKD. Positions 600–638 are disordered; the sequence is KLQGERKEADGEQDEEEKDDGEAKEISTPTHWSKLDPKT. Residues 610-621 show a composition bias toward acidic residues; the sequence is GEQDEEEKDDGE. Residue Thr-627 is modified to Phosphothreonine. The SAP domain occupies 636-670; it reads PKTMKVNDLRKELESRALSSKGLKSQLIARLTKQL. Lys-637 participates in a covalent cross-link: Glycyl lysine isopeptide (Lys-Gly) (interchain with G-Cter in ubiquitin). The interval 643 to 1150 is interaction with GATA1; it reads DLRKELESRA…QKSKENGASV (508 aa). Thr-667 carries the phosphothreonine modification. Composition is skewed to basic and acidic residues over residues 673 to 687, 694 to 713, 796 to 817, and 832 to 855; these read EEQK…KSEK, DRKS…EEIE, KEDK…KKEE, and SGDD…KDDS. Disordered regions lie at residues 673–713 and 796–915; these read EEQK…EEIE and KEDK…EKEK. Ser-685 and Ser-697 each carry phosphoserine. A compositionally biased stretch (acidic residues) spans 856 to 889; the sequence is KDDDETEEDNNQDEYDPMEAEEAEDEEDDRDEEE. Position 861 is a phosphothreonine (Thr-861). Basic and acidic residues predominate over residues 890 to 915; sequence MTKRDDKRDINRYCKERPSKDKEKEK. Residue Lys-1012 forms a Glycyl lysine isopeptide (Lys-Gly) (interchain with G-Cter in SUMO1); alternate linkage. Residue Lys-1012 forms a Glycyl lysine isopeptide (Lys-Gly) (interchain with G-Cter in SUMO2); alternate linkage. The stretch at 1033–1114 forms a coiled coil; that stretch reads DVGSLLQKLE…LQFENQMNKT (82 aa). Glycyl lysine isopeptide (Lys-Gly) (interchain with G-Cter in SUMO2) cross-links involve residues Lys-1067 and Lys-1135.

In terms of assembly, directly interacts with ESR1, NR3C1 and p53/TP53. Interacts (via N-terminus) with CALCOCO1. Interacts with MED1. Interacts with GATA1. Interacts with AR and GATA2. In terms of tissue distribution, expressed in various epithelial cancer cell lines, including breast, colon, prostate, pancreatic and leukemia. Expression is regulated by growth factors.

It is found in the cytoplasm. Its subcellular location is the perinuclear region. Its function is as follows. Associates with components of the Mediator and p160 coactivator complexes that play a role as intermediaries transducing regulatory signals from upstream transcriptional activator proteins to basal transcription machinery at the core promoter. Recruited to endogenous nuclear receptor target genes in response to the appropriate hormone. Also functions as a p53 coactivator. May thus play an important role in transcriptional regulation. May be involved in apoptosis signaling in the presence of the reinoid CD437. Apoptosis induction involves sequestration of 14-3-3 protein(s) and mediated altered expression of multiple cell cycle regulatory genes including MYC, CCNB1 and CDKN1A. Plays a role in cell cycle progression and/or cell proliferation. In association with CALCOCO1 enhances GATA1- and MED1-mediated transcriptional activation from the gamma-globin promoter during erythroid differentiation of K562 erythroleukemia cells. Can act as a both a coactivator and corepressor of AR-mediated transcription. Contributes to chromatin looping and AR transcription complex assembly by stabilizing AR-GATA2 association on chromatin and facilitating MED1 and RNA polymerase II recruitment to AR-binding sites. May play an important role in the growth and tumorigenesis of prostate cancer cells. This chain is Cell division cycle and apoptosis regulator protein 1 (CCAR1), found in Homo sapiens (Human).